Reading from the N-terminus, the 105-residue chain is Nitrogenase-stabilizing/protective protein NifW 2 (105 aa).

Belongs to the NifW family.

Functionally, may protect the nitrogenase Fe-Mo protein from oxidative damage. This chain is Nitrogenase-stabilizing/protective protein NifW 2 (nifW2), found in Trichormus variabilis (strain ATCC 29413 / PCC 7937) (Anabaena variabilis).